The following is an 86-amino-acid chain: Small ribosomal subunit protein bS18 (86 aa).

This sequence belongs to the bacterial ribosomal protein bS18 family. As to quaternary structure, part of the 30S ribosomal subunit. Forms a tight heterodimer with protein bS6.

Functionally, binds as a heterodimer with protein bS6 to the central domain of the 16S rRNA, where it helps stabilize the platform of the 30S subunit. The protein is Small ribosomal subunit protein bS18 of Protochlamydia amoebophila (strain UWE25).